The following is a 197-amino-acid chain: MNYSKAKYIMGAAKVSQLPEDTGVEVAFAGRSNAGKSSALNTLTDQKGLARVSKTPGRTQLINLFDLGNNNRLVDLPGYGYAKVSESIKRQWQSEMENYLTSRKCLNGIVLLVDSRHELKEFDSLMIEMAISFDLNLHILLTKADKLNNKERAQANRMIESFLKTFVSTDKISYQLFSSLTKMGLDKFKEKLDTWYQ.

The region spanning 22–197 (TGVEVAFAGR…FKEKLDTWYQ (176 aa)) is the EngB-type G domain. Residues 30 to 37 (GRSNAGKS), 57 to 61 (GRTQL), 75 to 78 (DLPG), 142 to 145 (TKAD), and 177 to 179 (FSS) contribute to the GTP site. 2 residues coordinate Mg(2+): Ser-37 and Thr-59.

Belongs to the TRAFAC class TrmE-Era-EngA-EngB-Septin-like GTPase superfamily. EngB GTPase family. The cofactor is Mg(2+).

Functionally, necessary for normal cell division and for the maintenance of normal septation. The sequence is that of Probable GTP-binding protein EngB from Francisella tularensis subsp. holarctica (strain FTNF002-00 / FTA).